We begin with the raw amino-acid sequence, 362 residues long: MTDIGAPVTVQVAVDPPYPVVIGTGLLDELEDLLADRHKVAVVHQPGLAETAEEIRKRLAGKGVDAHRIEIPDAEAGKDLPVVGFIWEVLGRIGIGRKDALVSLGGGAATDVAGFAAATWLRGVSIVHLPTTLLGMVDAAVGGKTGINTDAGKNLVGAFHQPLAVLVDLATLQTLPRDEMICGMAEVVKAGFIADPVILDLIEADPQAALDPAGDVLPELIRRAITVKAEVVAADEKESELREILNYGHTLGHAIERRERYRWRHGAAVSVGLVFAAELARLAGRLDDATAQRHRTILSSLGLPVSYDPDALPQLLEIMAGDKKTRAGVLRFVVLDGLAKPGRMVGPDPGLLVTAYAGVCAP.

NAD(+) is bound by residues 73–78 (DAEAGK), 107–111 (GAATD), 131–132 (TT), K144, K153, and 171–174 (TLQT). Residues E186, H249, and H265 each contribute to the Zn(2+) site.

Belongs to the sugar phosphate cyclases superfamily. Dehydroquinate synthase family. NAD(+) is required as a cofactor. It depends on Co(2+) as a cofactor. Zn(2+) serves as cofactor.

It localises to the cytoplasm. The catalysed reaction is 7-phospho-2-dehydro-3-deoxy-D-arabino-heptonate = 3-dehydroquinate + phosphate. Its pathway is metabolic intermediate biosynthesis; chorismate biosynthesis; chorismate from D-erythrose 4-phosphate and phosphoenolpyruvate: step 2/7. Catalyzes the conversion of 3-deoxy-D-arabino-heptulosonate 7-phosphate (DAHP) to dehydroquinate (DHQ). The protein is 3-dehydroquinate synthase of Mycobacterium bovis (strain ATCC BAA-935 / AF2122/97).